Reading from the N-terminus, the 260-residue chain is Putative ABC transporter ATP-binding protein PYRAB01300 (260 aa).

The 233-residue stretch at 2–234 (IEFKDVWFWY…DLRNFSLVEP (233 aa)) folds into the ABC transporter domain. 34 to 41 (GPNGSGKT) contacts ATP.

This sequence belongs to the ABC transporter superfamily.

Its subcellular location is the cell membrane. Functionally, probably part of an ABC transporter complex. Responsible for energy coupling to the transport system. This Pyrococcus abyssi (strain GE5 / Orsay) protein is Putative ABC transporter ATP-binding protein PYRAB01300.